Reading from the N-terminus, the 367-residue chain is dTDP-4-amino-4,6-dideoxy-D-glucose transaminase (367 aa).

Lys184 carries the post-translational modification N6-(pyridoxal phosphate)lysine.

Belongs to the DegT/DnrJ/EryC1 family. The cofactor is pyridoxal 5'-phosphate.

The enzyme catalyses dTDP-4-amino-4,6-dideoxy-D-glucose + 2-oxoglutarate = dTDP-4-dehydro-6-deoxy-alpha-D-glucose + L-glutamate. It functions in the pathway bacterial outer membrane biogenesis; lipopolysaccharide biosynthesis. Catalyzes the conversion of dTDP-4-dehydro-6-deoxy-D-glucose (dTDP-D-Glc4O) to dTDP-4-amino-4,6-dideoxy-D-glucose (dTDP-D-Qui4N). L-glutamine can also be used as amino donor. In Shigella dysenteriae, this protein is dTDP-4-amino-4,6-dideoxy-D-glucose transaminase (vioA).